The sequence spans 261 residues: Undecaprenyl-diphosphatase (261 aa).

A run of 8 helical transmembrane segments spans residues 1–21, 40–60, 79–99, 106–126, 140–160, 185–205, 210–230, and 239–259; these read MTVL…FLPI, GLTF…AYFW, GRLF…GVLF, IFRS…GLWW, VNLF…IPGV, FLMS…ELPL, LAFI…IKFL, and YLLF…VFWL.

This sequence belongs to the UppP family.

It localises to the cell membrane. The enzyme catalyses di-trans,octa-cis-undecaprenyl diphosphate + H2O = di-trans,octa-cis-undecaprenyl phosphate + phosphate + H(+). In terms of biological role, catalyzes the dephosphorylation of undecaprenyl diphosphate (UPP). Confers resistance to bacitracin. The chain is Undecaprenyl-diphosphatase from Moorella thermoacetica (strain ATCC 39073 / JCM 9320).